The sequence spans 324 residues: Glyoxylate/hydroxypyruvate reductase B (324 aa).

Active-site residues include Arg-237 and Glu-266. His-285 serves as the catalytic Proton donor.

It belongs to the D-isomer specific 2-hydroxyacid dehydrogenase family. GhrB subfamily. As to quaternary structure, homodimer.

It is found in the cytoplasm. The catalysed reaction is glycolate + NADP(+) = glyoxylate + NADPH + H(+). It carries out the reaction (R)-glycerate + NAD(+) = 3-hydroxypyruvate + NADH + H(+). It catalyses the reaction (R)-glycerate + NADP(+) = 3-hydroxypyruvate + NADPH + H(+). In terms of biological role, catalyzes the NADPH-dependent reduction of glyoxylate and hydroxypyruvate into glycolate and glycerate, respectively. This is Glyoxylate/hydroxypyruvate reductase B from Shigella flexneri serotype 5b (strain 8401).